Reading from the N-terminus, the 102-residue chain is Putative pterin-4-alpha-carbinolamine dehydratase (102 aa).

The protein belongs to the pterin-4-alpha-carbinolamine dehydratase family.

It carries out the reaction (4aS,6R)-4a-hydroxy-L-erythro-5,6,7,8-tetrahydrobiopterin = (6R)-L-erythro-6,7-dihydrobiopterin + H2O. In Burkholderia ambifaria (strain ATCC BAA-244 / DSM 16087 / CCUG 44356 / LMG 19182 / AMMD) (Burkholderia cepacia (strain AMMD)), this protein is Putative pterin-4-alpha-carbinolamine dehydratase.